Here is a 385-residue protein sequence, read N- to C-terminus: Gibberellin 20 oxidase 5 (385 aa).

The 101-residue stretch at 224–324 (DGSGIFRCNY…RRSLVFFSCP (101 aa)) folds into the Fe2OG dioxygenase domain. Fe cation contacts are provided by His-249, Asp-251, and His-305. Arg-315 is an active-site residue.

The protein belongs to the iron/ascorbate-dependent oxidoreductase family. GA20OX subfamily. Fe(2+) is required as a cofactor. It depends on L-ascorbate as a cofactor. As to expression, expressed in 3-day-old seedlings and siliques. Detected in dry seeds, roots, old leaves and inflorescences.

It catalyses the reaction gibberellin A12 + 2 2-oxoglutarate + 3 O2 + H(+) = gibberellin A9 + 2 succinate + 3 CO2 + 2 H2O. It carries out the reaction gibberellin A53 + 2 2-oxoglutarate + 3 O2 + H(+) = gibberellin A20 + 2 succinate + 3 CO2 + 2 H2O. The protein operates within plant hormone biosynthesis; gibberellin biosynthesis. In terms of biological role, key oxidase enzyme in the biosynthesis of gibberellin that catalyzes the conversion of GA12 and GA53 to GA9 and GA20 respectively, via a three-step oxidation at C-20 of the GA skeleton. The polypeptide is Gibberellin 20 oxidase 5 (GA20OX5) (Arabidopsis thaliana (Mouse-ear cress)).